Consider the following 150-residue polypeptide: UPF0208 membrane protein VS_0999 (150 aa).

2 helical membrane passes run 42-62 (FGVKVMPAIAAISVLTQMVFN) and 70-90 (AVVMALFAISLPLQGMWWLGN).

This sequence belongs to the UPF0208 family.

The protein resides in the cell inner membrane. In Vibrio atlanticus (strain LGP32) (Vibrio splendidus (strain Mel32)), this protein is UPF0208 membrane protein VS_0999.